The following is a 466-amino-acid chain: Citrate synthase, mitochondrial (466 aa).

A mitochondrion-targeting transit peptide spans 1–27 (MALLTAAARLLGAKNSSCLVLAARHAS). The SIFI-degron signature appears at 2-21 (ALLTAAARLLGAKNSSCLVL). Residue Lys-57 is modified to N6-succinyllysine. Lys-76 bears the N6-acetyllysine; alternate mark. Position 76 is an N6-succinyllysine; alternate (Lys-76). An N6-succinyllysine mark is found at Lys-103 and Lys-193. Residue Ser-226 is modified to Phosphoserine. His-301 is an active-site residue. Residues Lys-321 and Lys-327 each carry the N6-acetyllysine; alternate modification. N6-succinyllysine; alternate occurs at positions 321 and 327. The active site involves His-347. Arg-356 is an oxaloacetate binding site. N6-acetyllysine; alternate is present on Lys-375. Lys-375 carries the post-translational modification N6-succinyllysine; alternate. Lys-382 carries the N6-acetyllysine modification. Lys-393 is modified (N6-acetyllysine; alternate). Lys-393 is subject to N6-succinyllysine; alternate. At Lys-395 the chain carries N6,N6,N6-trimethyllysine. Residue Asp-402 is part of the active site. The oxaloacetate site is built by Arg-428 and Arg-448. Position 450 is an N6-succinyllysine (Lys-450). Lys-459 carries the N6-acetyllysine; alternate modification. Lys-459 is modified (N6-succinyllysine; alternate).

This sequence belongs to the citrate synthase family. As to quaternary structure, homodimer. Methylated. Trimethylation at Lys-395 by CSKMT decreases citrate synthase activity. Post-translationally, in response to mitochondrial stress, the precursor protein is ubiquitinated by the SIFI complex in the cytoplasm before mitochondrial import, leading to its degradation. Within the SIFI complex, UBR4 initiates ubiquitin chain that are further elongated or branched by KCMF1. As to expression, expressed in the head region and flagellum of epididymal sperm.

The protein resides in the mitochondrion matrix. The catalysed reaction is oxaloacetate + acetyl-CoA + H2O = citrate + CoA + H(+). The protein operates within carbohydrate metabolism; tricarboxylic acid cycle; isocitrate from oxaloacetate: step 1/2. In terms of biological role, key enzyme of the Krebs tricarboxylic acid cycle which catalyzes the synthesis of citrate from acetyl coenzyme A and oxaloacetate. This Rattus norvegicus (Rat) protein is Citrate synthase, mitochondrial (Cs).